Here is a 295-residue protein sequence, read N- to C-terminus: Protoheme IX farnesyltransferase (295 aa).

The next 9 helical transmembrane spans lie at 9 to 29 (ITKP…FFLA), 36 to 56 (FGVF…GCVF), 80 to 100 (LVSL…GVAL), 108 to 128 (LAAL…SLYL), 135 to 155 (GTLV…CAVT), 163 to 183 (LTLL…IAIF), 209 to 229 (IMLY…GGYA), 230 to 250 (GLNY…MAWK), and 265 to 285 (FVFS…DFQV).

The protein belongs to the UbiA prenyltransferase family. Protoheme IX farnesyltransferase subfamily.

The protein resides in the cell inner membrane. The enzyme catalyses heme b + (2E,6E)-farnesyl diphosphate + H2O = Fe(II)-heme o + diphosphate. It functions in the pathway porphyrin-containing compound metabolism; heme O biosynthesis; heme O from protoheme: step 1/1. Its function is as follows. Converts heme B (protoheme IX) to heme O by substitution of the vinyl group on carbon 2 of heme B porphyrin ring with a hydroxyethyl farnesyl side group. The chain is Protoheme IX farnesyltransferase from Pseudomonas savastanoi pv. phaseolicola (strain 1448A / Race 6) (Pseudomonas syringae pv. phaseolicola (strain 1448A / Race 6)).